The following is a 502-amino-acid chain: ATP synthase subunit alpha (502 aa).

ATP is bound at residue 169-176; it reads GDRQVGKT.

The protein belongs to the ATPase alpha/beta chains family. In terms of assembly, F-type ATPases have 2 components, CF(1) - the catalytic core - and CF(0) - the membrane proton channel. CF(1) has five subunits: alpha(3), beta(3), gamma(1), delta(1), epsilon(1). CF(0) has three main subunits: a(1), b(2) and c(9-12). The alpha and beta chains form an alternating ring which encloses part of the gamma chain. CF(1) is attached to CF(0) by a central stalk formed by the gamma and epsilon chains, while a peripheral stalk is formed by the delta and b chains.

The protein resides in the cell membrane. It catalyses the reaction ATP + H2O + 4 H(+)(in) = ADP + phosphate + 5 H(+)(out). Functionally, produces ATP from ADP in the presence of a proton gradient across the membrane. The alpha chain is a regulatory subunit. The polypeptide is ATP synthase subunit alpha (Lysinibacillus sphaericus (strain C3-41)).